A 692-amino-acid chain; its full sequence is DNA ligase (692 aa).

NAD(+) is bound by residues 34–38 (DAEYD), 83–84 (SL), and Glu124. Lys126 acts as the N6-AMP-lysine intermediate in catalysis. The NAD(+) site is built by Arg147, Glu193, Lys310, and Lys334. Positions 428, 431, 446, and 452 each coordinate Zn(2+). One can recognise a BRCT domain in the interval 612 to 692 (AGVAGVSGKT…ALLALLAGNA (81 aa)).

The protein belongs to the NAD-dependent DNA ligase family. LigA subfamily. It depends on Mg(2+) as a cofactor. Requires Mn(2+) as cofactor.

The catalysed reaction is NAD(+) + (deoxyribonucleotide)n-3'-hydroxyl + 5'-phospho-(deoxyribonucleotide)m = (deoxyribonucleotide)n+m + AMP + beta-nicotinamide D-nucleotide.. DNA ligase that catalyzes the formation of phosphodiester linkages between 5'-phosphoryl and 3'-hydroxyl groups in double-stranded DNA using NAD as a coenzyme and as the energy source for the reaction. It is essential for DNA replication and repair of damaged DNA. In Laribacter hongkongensis (strain HLHK9), this protein is DNA ligase.